A 167-amino-acid polypeptide reads, in one-letter code: Protein MIX23 (167 aa).

Residues 81 to 108 form a disordered region; that stretch reads QLDQDRNTSKSPLKSQQQLPSSSTTQVS. A compositionally biased stretch (low complexity) spans 89-106; the sequence is SKSPLKSQQQLPSSSTTQ.

The protein belongs to the MIX23 family.

This is Protein MIX23 (cid2) from Schizosaccharomyces pombe (strain 972 / ATCC 24843) (Fission yeast).